The sequence spans 287 residues: Vesicle-associated protein 4-3 (287 aa).

Basic and acidic residues predominate over residues 1–14 (MALTEDKSDSDGRR). The tract at residues 1–45 (MALTEDKSDSDGRRWGKFKLPFRNSNSQAPSASSSSSMATSSSSV) is disordered. A compositionally biased stretch (low complexity) spans 25–45 (SNSQAPSASSSSSMATSSSSV). The region spanning 99 to 221 (RLKLDPSAKL…EEQVMRVVFL (123 aa)) is the MSP domain.

Belongs to the VAMP-associated protein (VAP) (TC 9.B.17) family.

May play a role in vesicle trafficking. This Arabidopsis thaliana (Mouse-ear cress) protein is Vesicle-associated protein 4-3 (PVA43).